We begin with the raw amino-acid sequence, 182 residues long: Translation initiation factor IF-3 (182 aa).

The protein belongs to the IF-3 family. As to quaternary structure, monomer.

Its subcellular location is the cytoplasm. In terms of biological role, IF-3 binds to the 30S ribosomal subunit and shifts the equilibrium between 70S ribosomes and their 50S and 30S subunits in favor of the free subunits, thus enhancing the availability of 30S subunits on which protein synthesis initiation begins. The protein is Translation initiation factor IF-3 of Tropheryma whipplei (strain TW08/27) (Whipple's bacillus).